Reading from the N-terminus, the 718-residue chain is Ribosomal RNA large subunit methyltransferase K/L (718 aa).

The 112-residue stretch at 43-154 (TQYRILLWSR…QDELVVSLDL (112 aa)) folds into the THUMP domain.

It belongs to the methyltransferase superfamily. RlmKL family.

The protein localises to the cytoplasm. The catalysed reaction is guanosine(2445) in 23S rRNA + S-adenosyl-L-methionine = N(2)-methylguanosine(2445) in 23S rRNA + S-adenosyl-L-homocysteine + H(+). It carries out the reaction guanosine(2069) in 23S rRNA + S-adenosyl-L-methionine = N(2)-methylguanosine(2069) in 23S rRNA + S-adenosyl-L-homocysteine + H(+). In terms of biological role, specifically methylates the guanine in position 2445 (m2G2445) and the guanine in position 2069 (m7G2069) of 23S rRNA. This chain is Ribosomal RNA large subunit methyltransferase K/L, found in Histophilus somni (strain 129Pt) (Haemophilus somnus).